A 91-amino-acid chain; its full sequence is DNA/RNA-binding protein Alba (91 aa).

The protein belongs to the histone-like Alba family.

It localises to the cytoplasm. The protein resides in the chromosome. In terms of biological role, binds double-stranded DNA tightly but without sequence specificity. Involved in DNA compaction. The protein is DNA/RNA-binding protein Alba of Methanoculleus marisnigri (strain ATCC 35101 / DSM 1498 / JR1).